Consider the following 219-residue polypeptide: Interleukin-12 subunit alpha (219 aa).

A signal peptide spans 1-22 (MCPARSLLLVATLVLLDHLSLA). Intrachain disulfides connect C37–C110, C64–C196, and C85–C123. 2 N-linked (GlcNAc...) asparagine glycosylation sites follow: N93 and N107.

The protein belongs to the IL-6 superfamily. Heterodimer with IL12B; disulfide-linked. This heterodimer is known as interleukin IL-12. Heterodimer with EBI3/IL27B; not disulfide-linked. This heterodimer is known as interleukin IL-35. Interacts with NBR1; this interaction promotes IL-12 secretion.

The protein localises to the secreted. Its function is as follows. Heterodimerizes with IL12B to form the IL-12 cytokine or with EBI3/IL27B to form the IL-35 cytokine. IL-12 is primarily produced by professional antigen-presenting cells (APCs) such as B-cells and dendritic cells (DCs) as well as macrophages and granulocytes and regulates T-cell and natural killer-cell responses, induces the production of interferon-gamma (IFN-gamma), favors the differentiation of T-helper 1 (Th1) cells and is an important link between innate resistance and adaptive immunity. Mechanistically, exerts its biological effects through a receptor composed of IL12R1 and IL12R2 subunits. Binding to the receptor results in the rapid tyrosine phosphorylation of a number of cellular substrates including the JAK family kinases TYK2 and JAK2. In turn, recruited STAT4 gets phosphorylated and translocates to the nucleus where it regulates cytokine/growth factor responsive genes. As part of IL-35, plays essential roles in maintaining the immune homeostasis of the liver microenvironment and also functions as an immune-suppressive cytokine. Mediates biological events through unconventional receptors composed of IL12RB2 and gp130/IL6ST heterodimers or homodimers. Signaling requires the transcription factors STAT1 and STAT4, which form a unique heterodimer that binds to distinct DNA sites. This Homo sapiens (Human) protein is Interleukin-12 subunit alpha (IL12A).